The chain runs to 165 residues: Destrin (165 aa).

Alanine 2 is modified (N-acetylalanine). Serine 3 carries the phosphoserine modification. The ADF-H domain maps to 4 to 153 (GVQVADEVCR…NRTSIAEKLG (150 aa)). The residue at position 19 (lysine 19) is an N6-acetyllysine. The Nuclear localization signal motif lies at 30 to 34 (KKRKK).

It belongs to the actin-binding proteins ADF family. ISGylated.

Actin-depolymerizing protein. Severs actin filaments (F-actin) and binds to actin monomers (G-actin). Acts in a pH-independent manner. This chain is Destrin (Dstn), found in Rattus norvegicus (Rat).